The primary structure comprises 494 residues: 2,3-bisphosphoglycerate-independent phosphoglycerate mutase (494 aa).

Asp12 and Ser62 together coordinate Mn(2+). Residue Ser62 is the Phosphoserine intermediate of the active site. Residues His121, 150–151 (RD), Arg181, Arg187, 252–255 (RSDR), and Lys317 contribute to the substrate site. The Mn(2+) site is built by Asp384, His388, Asp425, His426, and His443.

The protein belongs to the BPG-independent phosphoglycerate mutase family. In terms of assembly, monomer. Mn(2+) serves as cofactor.

It carries out the reaction (2R)-2-phosphoglycerate = (2R)-3-phosphoglycerate. The protein operates within carbohydrate degradation; glycolysis; pyruvate from D-glyceraldehyde 3-phosphate: step 3/5. Its function is as follows. Catalyzes the interconversion of 2-phosphoglycerate and 3-phosphoglycerate. This Anaplasma marginale (strain St. Maries) protein is 2,3-bisphosphoglycerate-independent phosphoglycerate mutase.